The primary structure comprises 263 residues: Putative TATA-binding protein pB263R (263 aa).

The protein belongs to the asfivirus B263R family.

In terms of biological role, putative TATA-binding protein. The chain is Putative TATA-binding protein pB263R from African swine fever virus (isolate Tick/Malawi/Lil 20-1/1983) (ASFV).